A 940-amino-acid polypeptide reads, in one-letter code: Serine/threonine-protein phosphatase 1 regulatory subunit 10 (940 aa).

Residues 1-348 (MGSGPIDPKE…EPAPPSEAMD (348 aa)) are interaction with TOX4. The TFIIS N-terminal domain maps to 73 to 147 (KLLNNWLTYS…SDWMAVIRSQ (75 aa)). 4 disordered regions span residues 147–211 (QSST…FRST), 247–270 (SNVA…NTTP), 304–400 (KIKK…KSVT), and 533–905 (YVET…HGGD). 2 stretches are compositionally biased toward basic and acidic residues: residues 153–166 (AEKD…EGKS) and 174–196 (PLTE…EKPK). Lys179 is covalently cross-linked (Glycyl lysine isopeptide (Lys-Gly) (interchain with G-Cter in SUMO2)). At Thr256 the chain carries Phosphothreonine. A Glycyl lysine isopeptide (Lys-Gly) (interchain with G-Cter in SUMO2) cross-link involves residue Lys262. Position 313 is a phosphoserine (Ser313). Low complexity predominate over residues 325-336 (KTSTEPSTAKPS). The tract at residues 357–433 (PPVEVPELMD…NKIKDFGEAA (77 aa)) is necessary for interaction with PPP1CA. Ser382 carries the phosphoserine modification. The necessary for interaction with PPP1CC stretch occupies residues 393 to 408 (GRKRKSVTWPEEGKLR). The PP1-binding motif signature appears at 394–423 (RKRKSVTWPEEGKLREYFYFELDETERVNV). Ser398 carries the post-translational modification Phosphoserine; by PKA. Residues 418–619 (TERVNVNKIK…IKQMLVPHGL (202 aa)) are interaction with WDR82. 2 stretches are compositionally biased toward gly residues: residues 540-551 (GGSGGSPDGAGG) and 565-579 (MGAG…GGGI). The residue at position 545 (Ser545) is a Phosphoserine. Residues 583–595 (EILTSIMGSPNSH) show a composition bias toward polar residues. Position 591 is a phosphoserine (Ser591). Residues 596 to 611 (PSEELLKQPDYSDKIK) are compositionally biased toward basic and acidic residues. Over residues 644-655 (PPGPGGPMPGPH) the composition is skewed to pro residues. Arg665 is subject to Omega-N-methylarginine. The segment covering 676–690 (GDPFWDGPGDPMRGG) has biased composition (low complexity). The residue at position 693 (Arg693) is an Omega-N-methylarginine. Positions 714 to 723 (EPPPPPPPPF) are enriched in pro residues. 2 stretches are compositionally biased toward gly residues: residues 726–764 (ARGG…GMGN) and 790–845 (SSMG…GSGG). Position 739 is an omega-N-methylarginine (Arg739). Basic and acidic residues-rich tracts occupy residues 862–886 (PHDV…HDGP) and 894–903 (RGHDGGHSHG). The C3H1-type zinc-finger motif lies at 906–934 (MSNRPVCRHFMMKGNCRYENNCAFYHPGV).

In terms of assembly, component of the PNUTS-PP1 complex (also named PTW/PP1 complex), composed of PPP1R10/PNUTS, TOX4, WDR82, and PPP1CA (or PPP1CB or PPP1CC). In terms of processing, phosphorylated on Ser-398 by PKA within the region necessary for interaction with PPP1CA.

It localises to the nucleus. The protein localises to the chromosome. Its function is as follows. Substrate-recognition component of the PNUTS-PP1 protein phosphatase complex, a protein phosphatase 1 (PP1) complex that promotes RNA polymerase II transcription pause-release, allowing transcription elongation. Promoter-proximal pausing by RNA polymerase II is a transcription halt following transcription initiation but prior to elongation, which acts as a checkpoint to control that transcripts are favorably configured for transcriptional elongation. The PNUTS-PP1 complex mediates the release of RNA polymerase II from promoter-proximal region of genes by catalyzing dephosphorylation of proteins involved in transcription, such as AFF4, CDK9, MEPCE, INTS12, NCBP1, POLR2M/GDOWN1 and SUPT6H. The PNUTS-PP1 complex also regulates RNA polymerase II transcription termination by mediating dephosphorylation of SUPT5H in termination zones downstream of poly(A) sites, thereby promoting deceleration of RNA polymerase II transcription. PNUTS-PP1 complex is also involved in the response to replication stress by mediating dephosphorylation of POLR2A at 'Ser-5' of the CTD, promoting RNA polymerase II degradation. The PNUTS-PP1 complex also plays a role in the control of chromatin structure and cell cycle progression during the transition from mitosis into interphase. PNUTS-PP1 complex mediates dephosphorylation of MYC, promoting MYC stability by preventing MYC ubiquitination by the SCF(FBXW7) complex. In addition to acts as a substrate-recognition component, PPP1R10/PNUTS also acts as a nuclear targeting subunit for the PNUTS-PP1 complex. In some context, PPP1R10/PNUTS also acts as an inhibitor of protein phosphatase 1 (PP1) activity by preventing access to substrates, such as RB. The protein is Serine/threonine-protein phosphatase 1 regulatory subunit 10 (PPP1R10) of Macaca mulatta (Rhesus macaque).